Reading from the N-terminus, the 551-residue chain is MFS-type transporter ATEG_00331 (551 aa).

The N-terminal stretch at 1–18 is a signal peptide; the sequence is MKAWLLVSSLCLSTFIAA. The next 4 helical transmembrane spans lie at 40–60, 71–91, 102–122, and 132–152; these read LEFTWIGTAYLLPAAASTPPW, PVLMISIVVFFIGSLIGALAI, IQGTGGGGILGLSATVIGDVF, and GVLGVTWGVACGLGPIVGGAF. N-linked (GlcNAc...) asparagine glycans are attached at residues Asn-165 and Asn-178. 8 helical membrane passes run 179–199, 206–228, 233–255, 324–344, 354–374, 380–400, 417–437, and 493–513; these read LTTSVPVAGVAGALVLLFLEV, IIEGLLAMDWLGTITIVGATVMF, GYGGIAYPWNSATVVCLIVFGIG, VYLLPVAVTLCVASTATGLYI, IYFGLVMMILGHGLYINLQPY, IIIFQIIAGLGLGPLFQAPII, TVFFARDIATAMSIVFGGVIF, and SEWIFYTALSGAALLLSVFIS. The N-linked (GlcNAc...) asparagine glycan is linked to Asn-524.

Belongs to the major facilitator superfamily. TCR/Tet family.

Its subcellular location is the membrane. Its function is as follows. MFS-type transporter; part of the gene cluster that mediates the biosynthesis of isoflavipucine. The protein is MFS-type transporter ATEG_00331 of Aspergillus terreus (strain NIH 2624 / FGSC A1156).